Here is a 132-residue protein sequence, read N- to C-terminus: Large ribosomal subunit protein uL24 (132 aa).

Belongs to the universal ribosomal protein uL24 family. Part of the 50S ribosomal subunit.

Functionally, one of two assembly initiator proteins, it binds directly to the 5'-end of the 23S rRNA, where it nucleates assembly of the 50S subunit. One of the proteins that surrounds the polypeptide exit tunnel on the outside of the subunit. In Synechococcus sp. (strain JA-3-3Ab) (Cyanobacteria bacterium Yellowstone A-Prime), this protein is Large ribosomal subunit protein uL24.